A 259-amino-acid polypeptide reads, in one-letter code: Small ribosomal subunit protein eS1 (259 aa).

Belongs to the eukaryotic ribosomal protein eS1 family. As to quaternary structure, component of the small ribosomal subunit. Mature ribosomes consist of a small (40S) and a large (60S) subunit. The 40S subunit contains about 33 different proteins and 1 molecule of RNA (18S). The 60S subunit contains about 49 different proteins and 3 molecules of RNA (25S, 5.8S and 5S).

It localises to the cytoplasm. In Monosiga brevicollis (Choanoflagellate), this protein is Small ribosomal subunit protein eS1.